We begin with the raw amino-acid sequence, 361 residues long: Dual specificity mitogen-activated protein kinase kinase 6 (361 aa).

2 stretches are compositionally biased toward basic and acidic residues: residues 1 to 11 (MEGGSDKESKV) and 37 to 48 (PKELKLPKEVFE). The tract at residues 1 to 61 (MEGGSDKESK…PAPTPPRDLD (61 aa)) is disordered. The tract at residues 30–46 (VRGKKKLPKELKLPKEV) is d domain. One can recognise a Protein kinase domain in the interval 80–341 (LEQIGELGRG…YTELMQHPFF (262 aa)). ATP contacts are provided by residues 86 to 94 (LGRGAYGVV) and Lys-109. Asp-206 (proton acceptor) is an active-site residue. Position 234 is a phosphoserine; by MAPK3 (Ser-234). Thr-238 is subject to Phosphothreonine; by MAPK3. The DVD domain stretch occupies residues 338 to 361 (HPFFTLHDSKDTDVASFVKTILGD).

This sequence belongs to the protein kinase superfamily. STE Ser/Thr protein kinase family. MAP kinase kinase subfamily. As to quaternary structure, dimer. Interacts (via its D domain) with its MAP kinase substrates. Interacts (via its DVD domain) with MAP3Ks activators. In terms of processing, weakly autophosphorylated. Phosphorylated at Ser-234 and Thr-238 by the majority of M3Ks.

It is found in the nucleus. The protein localises to the cytoplasm. Its subcellular location is the cytoskeleton. It catalyses the reaction L-seryl-[protein] + ATP = O-phospho-L-seryl-[protein] + ADP + H(+). The enzyme catalyses L-threonyl-[protein] + ATP = O-phospho-L-threonyl-[protein] + ADP + H(+). It carries out the reaction L-tyrosyl-[protein] + ATP = O-phospho-L-tyrosyl-[protein] + ADP + H(+). Its activity is regulated as follows. Activated by dual phosphorylation on Ser-234 and Thr-238 in response to a variety of cellular stresses, including UV radiation, osmotic shock, hypoxia, inflammatory cytokines, interferon gamma (IFNG), and less often by growth factors. MAP2K6/MKK6 is activated by the majority of M3Ks. Its function is as follows. Dual specificity protein kinase which acts as an essential component of the MAP kinase signal transduction pathway. Catalyzes the concomitant phosphorylation of a threonine and a tyrosine residue in the MAP kinases p38 and plays an important role in the regulation of cellular responses to cytokines and all kinds of stresses. The p38 MAP kinase signal transduction pathway leads to direct activation of transcription factors. Phosphorylation by MAP2K6 asymmetrically activates p38 on one side of the blastodisc, an event which is necessary for blastomere cleavage. The chain is Dual specificity mitogen-activated protein kinase kinase 6 from Danio rerio (Zebrafish).